The chain runs to 535 residues: Cytochrome P450 monooxygenase BOA7 (535 aa).

Residues 20 to 37 (SIFLILGFFVLAAILIAW) form a helical membrane-spanning segment. N-linked (GlcNAc...) asparagine glycosylation is found at N65, N148, N180, and N420. Position 478 (C478) interacts with heme.

The protein belongs to the cytochrome P450 family. Heme serves as cofactor.

It localises to the membrane. It participates in polyketide biosynthesis. Its function is as follows. Cytochrome P450 monooxygenase; part of the gene cluster B that mediates the biosynthesis of botcinic acid and its botcinin derivatives, acetate-derived polyketides that contribute to virulence when combined with the sesquiterpene botrydial. Botcinic acid and its derivatives have been shown to induce chlorosis and necrosis during host plant infection, but also have antifungal activities. Two polyketide synthases, BOA6 and BOA9, are involved in the biosynthesis of botcinins. BOA6 mediates the formation of the per-methylated tetraketide core by condensation of four units of malonyl-CoA with one unit of acetyl-CoA, which would be methylated in activated methylene groups to yield a bicyclic acid intermediate that could then either be converted to botrylactone derivatives or lose the starter acetate unit through a retro-Claisen type C-C bond cleavage to yield botcinin derivatives. The second polyketide synthase, BOA9, is probably required for the biosynthesis of the tetraketide side chain of botcinins. The methyltransferase (MT) domain within BOA6 is probably responsible for the incorporation of four methyl groups. The trans-enoyl reductase BOA5 might take over the enoyl reductase function of BOA6 that misses an ER domain. The monooxygenases BOA2, BOA3 and BOA4 might be involved in further hydroxylations at C4, C5 and C8, whereas BOA7, close to BOA9, could potentially be involved in the hydroxylation at C4 in the side chain of botcinins. In Botryotinia fuckeliana (strain B05.10) (Noble rot fungus), this protein is Cytochrome P450 monooxygenase BOA7.